The sequence spans 91 residues: Small ribosomal subunit protein uS15 (91 aa).

The protein belongs to the universal ribosomal protein uS15 family. In terms of assembly, part of the 30S ribosomal subunit. Forms a bridge to the 50S subunit in the 70S ribosome, contacting the 23S rRNA.

One of the primary rRNA binding proteins, it binds directly to 16S rRNA where it helps nucleate assembly of the platform of the 30S subunit by binding and bridging several RNA helices of the 16S rRNA. In terms of biological role, forms an intersubunit bridge (bridge B4) with the 23S rRNA of the 50S subunit in the ribosome. The chain is Small ribosomal subunit protein uS15 from Rickettsia felis (strain ATCC VR-1525 / URRWXCal2) (Rickettsia azadi).